The sequence spans 112 residues: K(+)/H(+) antiporter modulator KhtS (112 aa).

Residues 42 to 64 (YVPMSSYPQETQSAKTPSPGSMH) form a disordered region. Over residues 47-60 (SYPQETQSAKTPSP) the composition is skewed to polar residues.

The protein resides in the cell membrane. In terms of biological role, modulates the activity of the potassium/proton antiporter KhtU. Involved in protection of the cell from methylglyoxal, a toxic by-product of glycolysis. This is K(+)/H(+) antiporter modulator KhtS from Bacillus subtilis (strain 168).